Here is a 260-residue protein sequence, read N- to C-terminus: Serine protease VLSP-1 (260 aa).

A signal peptide spans 1 to 18 (MVLIRVLANLLVLHLSYA). Positions 19-24 (QKSSEL) are excised as a propeptide. Residues 25 to 251 (VIGGDECNIN…YSDWIQSIIA (227 aa)) form the Peptidase S1 domain. 6 disulfide bridges follow: C31–C165, C52–C68, C100–C258, C144–C212, C176–C191, and C202–C227. N44 carries N-linked (GlcNAc...) asparagine glycosylation. H67 functions as the Charge relay system in the catalytic mechanism. An N-linked (GlcNAc...) asparagine glycan is attached at N103. The active-site Charge relay system is the D112. Residue N156 is glycosylated (N-linked (GlcNAc...) asparagine). The active-site Charge relay system is S206.

This sequence belongs to the peptidase S1 family. Snake venom subfamily. In terms of tissue distribution, expressed by the venom gland.

It localises to the secreted. In terms of biological role, snake venom serine protease that may act in the hemostasis system of the prey. The sequence is that of Serine protease VLSP-1 from Macrovipera lebetinus (Levantine viper).